Reading from the N-terminus, the 382-residue chain is C-type lectin domain-containing protein 38 (382 aa).

The Cytoplasmic portion of the chain corresponds to 1-40 (MAIFYDDPLERLNQPIKTKSYRKKQVVQRVHVFIFDNWKL). A helical membrane pass occupies residues 41 to 61 (ILLGILNLIFLIIAIVFAILF). Residues 62–382 (FVGSADCAQL…FFLCKRAIDF (321 aa)) lie on the Extracellular side of the membrane. Positions 97–116 (NAITTTQGTPSNKTSTTTPS) are disordered. Positions 100–116 (TTTQGTPSNKTSTTTPS) are enriched in low complexity. Asparagine 108 and asparagine 189 each carry an N-linked (GlcNAc...) asparagine glycan. 2 C-type lectin domains span residues 129-250 (VGTK…FVCE) and 264-377 (YNKN…FLCK). 4 cysteine pairs are disulfide-bonded: cysteine 150-cysteine 249, cysteine 223-cysteine 241, cysteine 285-cysteine 376, and cysteine 348-cysteine 368.

Expressed in ventral cord motor neurons and PLM touch neurons.

The protein resides in the membrane. Involved in negative modulation of unc-40-mediated axon outgrowth. Required for proper presynaptic development in axons that have reached their targets. May function in concert with E3 ubiquitin-protein ligase rpm-1 in regulating axon outgrowth. This chain is C-type lectin domain-containing protein 38, found in Caenorhabditis elegans.